The chain runs to 351 residues: Protein-glutamate methylesterase/protein-glutamine glutaminase 2 (351 aa).

A Response regulatory domain is found at 4–121; the sequence is KVLVVDDSAL…PQDFNEYQDL (118 aa). A 4-aspartylphosphate modification is found at Asp55. The CheB-type methylesterase domain maps to 156–348; it reads RVINTQLVAI…DKMLNYLASL (193 aa). Residues Ser168, His194, and Asp290 contribute to the active site.

This sequence belongs to the CheB family. Post-translationally, phosphorylated by CheA. Phosphorylation of the N-terminal regulatory domain activates the methylesterase activity.

The protein localises to the cytoplasm. It catalyses the reaction [protein]-L-glutamate 5-O-methyl ester + H2O = L-glutamyl-[protein] + methanol + H(+). It carries out the reaction L-glutaminyl-[protein] + H2O = L-glutamyl-[protein] + NH4(+). Involved in chemotaxis. Part of a chemotaxis signal transduction system that modulates chemotaxis in response to various stimuli. Catalyzes the demethylation of specific methylglutamate residues introduced into the chemoreceptors (methyl-accepting chemotaxis proteins or MCP) by CheR. Also mediates the irreversible deamidation of specific glutamine residues to glutamic acid. The polypeptide is Protein-glutamate methylesterase/protein-glutamine glutaminase 2 (Shewanella sp. (strain MR-4)).